The following is a 513-amino-acid chain: GMP synthase [glutamine-hydrolyzing] (513 aa).

Residues 5–196 (QILILDFGSQ…LYDIAKCNKD (192 aa)) enclose the Glutamine amidotransferase type-1 domain. Cysteine 83 serves as the catalytic Nucleophile. Active-site residues include histidine 170 and glutamate 172. The GMPS ATP-PPase domain maps to 197-388 (WNLDDFIDQQ…LGLPEEMINR (192 aa)). Residue 224-230 (SGGVDSS) coordinates ATP.

In terms of assembly, homodimer.

It catalyses the reaction XMP + L-glutamine + ATP + H2O = GMP + L-glutamate + AMP + diphosphate + 2 H(+). Its pathway is purine metabolism; GMP biosynthesis; GMP from XMP (L-Gln route): step 1/1. Its function is as follows. Catalyzes the synthesis of GMP from XMP. This chain is GMP synthase [glutamine-hydrolyzing], found in Mesoplasma florum (strain ATCC 33453 / NBRC 100688 / NCTC 11704 / L1) (Acholeplasma florum).